The sequence spans 504 residues: Doublesex- and mab-3-related transcription factor A1 (504 aa).

Over residues 1–13 (MERSQCGSRDRGV) the composition is skewed to basic and acidic residues. The disordered stretch occupies residues 1-27 (MERSQCGSRDRGVSGRPHLAPGLVVAA). Residues 97-144 (CARCRNHGVVSALKGHKRFCRWRDCACAKCTLIAERQRVMAAQVALRR) constitute a DNA-binding region (DM). 2 disordered regions span residues 170–192 (GRASGGGGRAENPQSTGGPAAGA) and 266–307 (SISE…NESE). Low complexity predominate over residues 293 to 306 (RSLSSSDLESGNES). Residues 327 to 362 (RDPLDILTKIFPNYRRSRLEGILRFCKGDVVQAIEQ) enclose the DMA domain.

Belongs to the DMRT family. Expressed in liver, kidney, pancreas, prostate and weakly detected in testis and ovary.

It localises to the nucleus. The polypeptide is Doublesex- and mab-3-related transcription factor A1 (DMRTA1) (Homo sapiens (Human)).